We begin with the raw amino-acid sequence, 72 residues long: MSLKVDCPTCGTPVEWSPLSQFRPFCSDRCRLIDLGEWFSEERSIAGEEHTPSSDTARPQLSAEDLALLEQD.

4 residues coordinate Zn(2+): C7, C10, C26, and C30. A disordered region spans residues S44–D72.

The protein belongs to the DNA gyrase inhibitor YacG family. Interacts with GyrB. The cofactor is Zn(2+).

Its function is as follows. Inhibits all the catalytic activities of DNA gyrase by preventing its interaction with DNA. Acts by binding directly to the C-terminal domain of GyrB, which probably disrupts DNA binding by the gyrase. The sequence is that of DNA gyrase inhibitor YacG from Tolumonas auensis (strain DSM 9187 / NBRC 110442 / TA 4).